Consider the following 321-residue polypeptide: uncharacterized protein (321 aa).

A run of 9 helical transmembrane segments spans residues 10–28, 41–63, 94–111, 116–138, 143–165, 200–222, 237–259, 266–283, and 293–315; these read LWCSFGVFLIIIIIIEMSI, IALYSSCISMLTAILFDVLIWIY, NVAMWFFLFQLFSISMVH, LFYGTFLALVFRSSIIFFGVWLL, FLFYVLSIILLFTGIITILSNGV, NGVIVATPLFLVLILIELNDIIF, PFIIITSSFFSIIGLRSIYVILA, YIIKYGITLILIFISIKI, and IMLSSFFIVCILVACFIIEKFFF.

The protein belongs to the TerC family.

It localises to the cell membrane. This is an uncharacterized protein from Buchnera aphidicola subsp. Baizongia pistaciae (strain Bp).